A 170-amino-acid polypeptide reads, in one-letter code: Peptide deformylase (170 aa).

Residues Cys91 and His133 each coordinate Fe cation. Residue Glu134 is part of the active site. Position 137 (His137) interacts with Fe cation.

It belongs to the polypeptide deformylase family. The cofactor is Fe(2+).

It carries out the reaction N-terminal N-formyl-L-methionyl-[peptide] + H2O = N-terminal L-methionyl-[peptide] + formate. In terms of biological role, removes the formyl group from the N-terminal Met of newly synthesized proteins. Requires at least a dipeptide for an efficient rate of reaction. N-terminal L-methionine is a prerequisite for activity but the enzyme has broad specificity at other positions. This chain is Peptide deformylase, found in Yersinia enterocolitica serotype O:8 / biotype 1B (strain NCTC 13174 / 8081).